We begin with the raw amino-acid sequence, 237 residues long: Neural retina-specific leucine zipper protein (237 aa).

Residues K20 and K24 each participate in a glycyl lysine isopeptide (Lys-Gly) (interchain with G-Cter in SUMO) cross-link. Residues 26–64 form a disordered region; sequence EPSEGRSGVPTASLGSTPYSSVPPSPTFSEPGMVGGGEA. The segment at 30–93 is minimal transactivation domain (MTD); that stretch reads GRSGVPTASL…SDEVLGLSPD (64 aa). A basic motif region spans residues 159–185; it reads RLKQRRRTLKNRGYAQACRSKRLQQRR. The region spanning 159–222 is the bZIP domain; it reads RLKQRRRTLK…DLYKARCDRL (64 aa). The tract at residues 187–208 is leucine-zipper; sequence LEAERARLAAQLDALRAEVARL.

Belongs to the bZIP family. As to quaternary structure, interacts with FIZ1; this interaction represses transactivation. Interacts (via the leucine-zipper domain) with CRX. In terms of processing, disumoylated at Lys-20. Sumoylation modulates the transcriptional activity of NRL on RHO and NR2E3 promoters, and is required for normal rod differentiation. Post-translationally, phosphorylated. As to expression, expressed in the retina (at protein level).

It is found in the cytoplasm. The protein resides in the nucleus. In terms of biological role, acts as a transcriptional activator which regulates the expression of several rod-specific genes, including RHO and PDE6B. Also functions as a transcriptional coactivator, stimulating transcription mediated by the transcription factor CRX and NR2E3. Binds to the rhodopsin promoter in a sequence-specific manner. In Mus musculus (Mouse), this protein is Neural retina-specific leucine zipper protein (Nrl).